A 315-amino-acid polypeptide reads, in one-letter code: Lipoyl synthase (315 aa).

Residues Cys62, Cys67, Cys73, Cys88, Cys92, Cys95, and Ser302 each contribute to the [4Fe-4S] cluster site. Residues 74 to 291 enclose the Radical SAM core domain; that stretch reads FGKGTATFMI…ETEALRMGFR (218 aa).

Belongs to the radical SAM superfamily. Lipoyl synthase family. Requires [4Fe-4S] cluster as cofactor.

The protein resides in the cytoplasm. The enzyme catalyses [[Fe-S] cluster scaffold protein carrying a second [4Fe-4S](2+) cluster] + N(6)-octanoyl-L-lysyl-[protein] + 2 oxidized [2Fe-2S]-[ferredoxin] + 2 S-adenosyl-L-methionine + 4 H(+) = [[Fe-S] cluster scaffold protein] + N(6)-[(R)-dihydrolipoyl]-L-lysyl-[protein] + 4 Fe(3+) + 2 hydrogen sulfide + 2 5'-deoxyadenosine + 2 L-methionine + 2 reduced [2Fe-2S]-[ferredoxin]. It participates in protein modification; protein lipoylation via endogenous pathway; protein N(6)-(lipoyl)lysine from octanoyl-[acyl-carrier-protein]: step 2/2. Functionally, catalyzes the radical-mediated insertion of two sulfur atoms into the C-6 and C-8 positions of the octanoyl moiety bound to the lipoyl domains of lipoate-dependent enzymes, thereby converting the octanoylated domains into lipoylated derivatives. This is Lipoyl synthase from Azoarcus sp. (strain BH72).